An 841-amino-acid chain; its full sequence is Translation initiation factor IF-2 (841 aa).

Composition is skewed to basic and acidic residues over residues 1 to 12 (MSDNEIKNEAPK), 50 to 92 (EAAL…EATK), 114 to 170 (EQPK…REEA), 188 to 202 (READRDNDRRSEANR), and 213 to 235 (KKGDREDKNERNADRRNQKDVKG). Disordered regions lie at residues 1–24 (MSDNEIKNEAPKKLSLQRRTKTTV) and 50–246 (EAAL…GSAL). A tr-type G domain is found at 340–510 (TRAPVVTIMG…LLQSEVLELT (171 aa)). The G1 stretch occupies residues 349–356 (GHVDHGKT). Position 349–356 (349–356 (GHVDHGKT)) interacts with GTP. The tract at residues 374–378 (GITQH) is G2. Residues 396 to 399 (DTPG) are G3. GTP is bound by residues 396–400 (DTPGH) and 450–453 (NKID). The segment at 450–453 (NKID) is G4. A G5 region spans residues 486–488 (SAK).

It belongs to the TRAFAC class translation factor GTPase superfamily. Classic translation factor GTPase family. IF-2 subfamily.

The protein resides in the cytoplasm. In terms of biological role, one of the essential components for the initiation of protein synthesis. Protects formylmethionyl-tRNA from spontaneous hydrolysis and promotes its binding to the 30S ribosomal subunits. Also involved in the hydrolysis of GTP during the formation of the 70S ribosomal complex. The protein is Translation initiation factor IF-2 of Actinobacillus pleuropneumoniae serotype 3 (strain JL03).